The sequence spans 483 residues: Glucose-1-phosphate adenylyltransferase large subunit 3, chloroplastic/amyloplastic (483 aa).

It belongs to the bacterial/plant glucose-1-phosphate adenylyltransferase family. As to quaternary structure, heterotetramer. Tubers.

It localises to the plastid. The protein localises to the chloroplast. Its subcellular location is the amyloplast. It catalyses the reaction alpha-D-glucose 1-phosphate + ATP + H(+) = ADP-alpha-D-glucose + diphosphate. It participates in glycan biosynthesis; starch biosynthesis. Activated by 3'phosphoglycerate, inhibited by orthophosphate. Allosteric regulation. Its function is as follows. This protein plays a role in synthesis of starch. It catalyzes the synthesis of the activated glycosyl donor, ADP-glucose from Glc-1-P and ATP. The chain is Glucose-1-phosphate adenylyltransferase large subunit 3, chloroplastic/amyloplastic (AGPS3) from Solanum tuberosum (Potato).